The primary structure comprises 1613 residues: Vitellogenin-2 (1613 aa).

An N-terminal signal peptide occupies residues 1–15 (MRSIIIASLVALALA). The Vitellogenin domain occupies 24-687 (FEPKTDYHYK…EKNSFLPKDL (664 aa)). An N-linked (GlcNAc...) asparagine glycan is attached at Asn1268. Positions 1308–1477 (SVCKVQKNQI…SYLLKNEECE (170 aa)) constitute a VWFD domain. 2 disulfides stabilise this stretch: Cys1310–Cys1440 and Cys1332–Cys1476. A disordered region spans residues 1491–1531 (KYERDEEQSDEYSSEETYDYEQENTKKSQKNQRSQKKSDLV). The span at 1495-1512 (DEEQSDEYSSEETYDYEQ) shows a compositional bias: acidic residues.

In terms of tissue distribution, expressed in the intestine of adult hermaphrodites.

The protein localises to the secreted. Functionally, precursor of the egg-yolk proteins that are sources of nutrients during embryonic development. Together with other vitellogenins, may play a role in modulating life-span, acting via induction of autophagy and lysosomal lipolysis. This chain is Vitellogenin-2 (vit-2), found in Caenorhabditis elegans.